A 284-amino-acid polypeptide reads, in one-letter code: MMEQKTVRVGDIDVANDKPFVLFGGMNVLESRDLAMKICEHYVEVTNKLGIPFVFKASFDKANRSSVHSYRGPGMEEGLKIFQELKDTFGVKIITDIHEIYQAQPVADVVDVIQLPAFLARQTDLVEAMAKTGAVINVKKPQYMSPGQVGNIVEKFAECDNENVILCERGALHGYDNLVVDMLGFDVMKKASKGSPIIFDVTHALQCRDPLGAASGGRREQTVDLARSGIATGIAGLFMEAHPAPDQARCDGPSAFPLDKLEPFLNQIKQLDDLIKGFEAIEIN.

Belongs to the KdsA family.

The protein localises to the cytoplasm. The catalysed reaction is D-arabinose 5-phosphate + phosphoenolpyruvate + H2O = 3-deoxy-alpha-D-manno-2-octulosonate-8-phosphate + phosphate. It functions in the pathway carbohydrate biosynthesis; 3-deoxy-D-manno-octulosonate biosynthesis; 3-deoxy-D-manno-octulosonate from D-ribulose 5-phosphate: step 2/3. The protein operates within bacterial outer membrane biogenesis; lipopolysaccharide biosynthesis. The protein is 2-dehydro-3-deoxyphosphooctonate aldolase of Photobacterium profundum (strain SS9).